Consider the following 943-residue polypeptide: Isoleucine--tRNA ligase (943 aa).

The 'HIGH' region motif lies at proline 58–histidine 68. An L-isoleucyl-5'-AMP-binding site is contributed by glutamate 567. The 'KMSKS' region motif lies at lysine 608–serine 612. Lysine 611 is an ATP binding site. Positions 906, 909, 926, and 929 each coordinate Zn(2+).

Belongs to the class-I aminoacyl-tRNA synthetase family. IleS type 1 subfamily. In terms of assembly, monomer. Zn(2+) is required as a cofactor.

The protein localises to the cytoplasm. The catalysed reaction is tRNA(Ile) + L-isoleucine + ATP = L-isoleucyl-tRNA(Ile) + AMP + diphosphate. Its function is as follows. Catalyzes the attachment of isoleucine to tRNA(Ile). As IleRS can inadvertently accommodate and process structurally similar amino acids such as valine, to avoid such errors it has two additional distinct tRNA(Ile)-dependent editing activities. One activity is designated as 'pretransfer' editing and involves the hydrolysis of activated Val-AMP. The other activity is designated 'posttransfer' editing and involves deacylation of mischarged Val-tRNA(Ile). This is Isoleucine--tRNA ligase from Ectopseudomonas mendocina (strain ymp) (Pseudomonas mendocina).